The following is a 277-amino-acid chain: Energy-coupling factor transporter ATP-binding protein EcfA1 (277 aa).

The ABC transporter domain maps to 5 to 240; the sequence is LEVENLVFKY…SEDMVEIGLD (236 aa). Residue 40–47 coordinates ATP; sequence GQNGSGKS. The active-site Proton acceptor is Glu-166.

It belongs to the ABC transporter superfamily. Energy-coupling factor EcfA family. In terms of assembly, forms a stable energy-coupling factor (ECF) transporter complex composed of 2 membrane-embedded substrate-binding proteins (S component), 2 ATP-binding proteins (A component) and 2 transmembrane proteins (T component). In L.lactis forms a stable complex with EcfA' and EcfT and substrate-binding components. In E.coli forms a stable complex with EcfA', EcfT and individually with 3 tested substrate-binding components (BioY, NiaX and ThiT) with a stoichiometry of 1.1:1:1. The core ECF complex interacts with a number of substrate-specific binding components, including BioY, BioY2, HmpT, NiaX, PanT, QueT, RibU and ThiT.

It is found in the cell membrane. ATP-binding (A) component of a common energy-coupling factor (ECF) ABC-transporter complex. Unlike classic ABC transporters this ECF transporter provides the energy necessary to transport a number of different substrates. In this organism these probably include biotin, thiamine precursor, niacin, pantothenic acid, queuosine precursor, riboflavin and thiamine. Uptake of niacin or riboflavin into proteosomes containing EcfA1A2T and Niax or RibU has been demonstrated. Uptake requires hydrolyzable Mg-ATP and is substrate-specific; NiaX-containing proteosomes did not transport riboflavin. The polypeptide is Energy-coupling factor transporter ATP-binding protein EcfA1 (Lactococcus lactis subsp. cremoris (strain MG1363)).